We begin with the raw amino-acid sequence, 68 residues long: Large ribosomal subunit protein uL30 (68 aa).

This sequence belongs to the universal ribosomal protein uL30 family. In terms of assembly, part of the 50S ribosomal subunit.

The chain is Large ribosomal subunit protein uL30 from Bartonella quintana (strain Toulouse) (Rochalimaea quintana).